We begin with the raw amino-acid sequence, 337 residues long: 1-aminocyclopropane-1-carboxylate deaminase (337 aa).

N6-(pyridoxal phosphate)lysine is present on Lys-50. The active-site Nucleophile is the Ser-77.

It belongs to the ACC deaminase/D-cysteine desulfhydrase family. Homotrimer. Pyridoxal 5'-phosphate is required as a cofactor.

It carries out the reaction 1-aminocyclopropane-1-carboxylate + H2O = 2-oxobutanoate + NH4(+). Functionally, catalyzes a cyclopropane ring-opening reaction, the irreversible conversion of 1-aminocyclopropane-1-carboxylate (ACC) to ammonia and alpha-ketobutyrate. Allows growth on ACC as a nitrogen source. The chain is 1-aminocyclopropane-1-carboxylate deaminase from Rhizobium radiobacter (Agrobacterium tumefaciens).